Reading from the N-terminus, the 429-residue chain is Adenylosuccinate synthetase (429 aa).

GTP-binding positions include 12–18 (GDEGKGK) and 40–42 (GHT). The active-site Proton acceptor is the aspartate 13. The Mg(2+) site is built by aspartate 13 and glycine 40. IMP is bound by residues 13 to 16 (DEGK), 38 to 41 (NAGH), threonine 130, arginine 144, glutamine 225, threonine 240, and arginine 304. The Proton donor role is filled by histidine 41. 300 to 306 (ATTGRPR) is a binding site for substrate. Residues arginine 306, 332 to 334 (KLD), and 414 to 416 (SVG) contribute to the GTP site.

It belongs to the adenylosuccinate synthetase family. In terms of assembly, homodimer. It depends on Mg(2+) as a cofactor.

It localises to the cytoplasm. The catalysed reaction is IMP + L-aspartate + GTP = N(6)-(1,2-dicarboxyethyl)-AMP + GDP + phosphate + 2 H(+). It functions in the pathway purine metabolism; AMP biosynthesis via de novo pathway; AMP from IMP: step 1/2. Plays an important role in the de novo pathway of purine nucleotide biosynthesis. Catalyzes the first committed step in the biosynthesis of AMP from IMP. This is Adenylosuccinate synthetase from Syntrophobacter fumaroxidans (strain DSM 10017 / MPOB).